The primary structure comprises 134 residues: Holo-[acyl-carrier-protein] synthase (134 aa).

Mg(2+) is bound by residues Asp8 and Glu57.

It belongs to the P-Pant transferase superfamily. AcpS family. Mg(2+) is required as a cofactor.

Its subcellular location is the cytoplasm. It catalyses the reaction apo-[ACP] + CoA = holo-[ACP] + adenosine 3',5'-bisphosphate + H(+). Its function is as follows. Transfers the 4'-phosphopantetheine moiety from coenzyme A to a Ser of acyl-carrier-protein. The sequence is that of Holo-[acyl-carrier-protein] synthase from Rhizobium etli (strain CIAT 652).